The sequence spans 185 residues: Elongation factor P (185 aa).

This sequence belongs to the elongation factor P family.

It is found in the cytoplasm. It functions in the pathway protein biosynthesis; polypeptide chain elongation. Functionally, involved in peptide bond synthesis. Stimulates efficient translation and peptide-bond synthesis on native or reconstituted 70S ribosomes in vitro. Probably functions indirectly by altering the affinity of the ribosome for aminoacyl-tRNA, thus increasing their reactivity as acceptors for peptidyl transferase. The sequence is that of Elongation factor P from Listeria innocua serovar 6a (strain ATCC BAA-680 / CLIP 11262).